A 261-amino-acid chain; its full sequence is UPF0246 protein Vapar_1301 (261 aa).

Belongs to the UPF0246 family.

The sequence is that of UPF0246 protein Vapar_1301 from Variovorax paradoxus (strain S110).